The following is a 64-amino-acid chain: Large ribosomal subunit protein bL33 (64 aa).

The protein belongs to the bacterial ribosomal protein bL33 family.

The chain is Large ribosomal subunit protein bL33 from Nostoc sp. (strain PCC 7120 / SAG 25.82 / UTEX 2576).